Reading from the N-terminus, the 91-residue chain is Probable Fe(2+)-trafficking protein (91 aa).

This sequence belongs to the Fe(2+)-trafficking protein family.

Could be a mediator in iron transactions between iron acquisition and iron-requiring processes, such as synthesis and/or repair of Fe-S clusters in biosynthetic enzymes. This is Probable Fe(2+)-trafficking protein from Paraburkholderia phytofirmans (strain DSM 17436 / LMG 22146 / PsJN) (Burkholderia phytofirmans).